The primary structure comprises 150 residues: 5-hydroxytryptamine receptor 1B (150 aa).

Topologically, residues 1–83 (VEARSRILKQ…AARERKATKT (83 aa)) are extracellular. Over residues 27–40 (DSPGSTSSVTSINS) the composition is skewed to polar residues. The interval 27–50 (DSPGSTSSVTSINSRAPDLPSESG) is disordered. A helical transmembrane segment spans residues 84 to 105 (LGIILGAFIVCWLPFFIISLAM). The Cytoplasmic portion of the chain corresponds to 106–115 (PICKDACWFH). The chain crosses the membrane as a helical span at residues 116–138 (LAIFDFFTWLGYLNSLINPIIYT). Residues 133–137 (NPIIY) carry the NPxxY motif; important for ligand-induced conformation changes and signaling motif. Residues 139-150 (MFNEDFKQAFHK) are Extracellular-facing.

This sequence belongs to the G-protein coupled receptor 1 family. In terms of assembly, homodimer. Heterodimer with HTR1D. Post-translationally, phosphorylated. Desensitization of the receptor may be mediated by its phosphorylation. In terms of processing, palmitoylated.

The protein resides in the cell membrane. In terms of biological role, G-protein coupled receptor for 5-hydroxytryptamine (serotonin). Also functions as a receptor for ergot alkaloid derivatives, various anxiolytic and antidepressant drugs and other psychoactive substances, such as lysergic acid diethylamide (LSD). Ligand binding causes a conformation change that triggers signaling via guanine nucleotide-binding proteins (G proteins) and modulates the activity of downstream effectors, such as adenylate cyclase. HTR1B is coupled to G(i)/G(o) G alpha proteins and mediates inhibitory neurotransmission by inhibiting adenylate cyclase activity. Arrestin family members inhibit signaling via G proteins and mediate activation of alternative signaling pathways. Regulates the release of 5-hydroxytryptamine, dopamine and acetylcholine in the brain, and thereby affects neural activity, nociceptive processing, pain perception, mood and behavior. Besides, plays a role in vasoconstriction of cerebral arteries. This Sus scrofa (Pig) protein is 5-hydroxytryptamine receptor 1B (HTR1B).